The primary structure comprises 324 residues: Lignin-forming anionic peroxidase (324 aa).

The N-terminal stretch at 1–22 (MSFLRFVGAILFLVAIFGASNA) is a signal peptide. Position 23 is a pyrrolidone carboxylic acid (Gln23). Cystine bridges form between Cys33–Cys111, Cys66–Cys71, Cys117–Cys320, and Cys196–Cys228. A glycan (N-linked (GlcNAc...) asparagine) is linked at Asn35. The active-site Proton acceptor is His64. The Ca(2+) site is built by Asp65, Val68, Gly70, Asp72, and Ser74. Asn150 carries N-linked (GlcNAc...) asparagine glycosylation. Residue Pro159 coordinates substrate. Residue His189 coordinates heme b. Thr190 serves as a coordination point for Ca(2+). A glycan (N-linked (GlcNAc...) asparagine) is linked at Asn207. Positions 242, 245, and 250 each coordinate Ca(2+).

The protein belongs to the peroxidase family. Classical plant (class III) peroxidase subfamily. Ca(2+) is required as a cofactor. Requires heme b as cofactor.

It is found in the secreted. It carries out the reaction 2 a phenolic donor + H2O2 = 2 a phenolic radical donor + 2 H2O. Removal of H(2)O(2), oxidation of toxic reductants, biosynthesis and degradation of lignin, suberization, auxin catabolism, response to environmental stresses such as wounding, pathogen attack and oxidative stress. These functions might be dependent on each isozyme/isoform in each plant tissue. In terms of biological role, plays an integral role in secondary cell wall biosynthesis by the polymerization of cinnamyl alcohols into lignin and by forming rigid cross-links between cellulose, pectin, hydroxy-proline-rich glycoproteins, and lignin. The polypeptide is Lignin-forming anionic peroxidase (Nicotiana tabacum (Common tobacco)).